Consider the following 399-residue polypeptide: Pyridinium-3,5-bisthiocarboxylic acid mononucleotide nickel insertion protein (399 aa).

Belongs to the LarC family.

It carries out the reaction Ni(II)-pyridinium-3,5-bisthiocarboxylate mononucleotide = pyridinium-3,5-bisthiocarboxylate mononucleotide + Ni(2+). In terms of biological role, involved in the biosynthesis of a nickel-pincer cofactor ((SCS)Ni(II) pincer complex). Binds Ni(2+), and functions in nickel delivery to pyridinium-3,5-bisthiocarboxylic acid mononucleotide (P2TMN), to form the mature cofactor. Is thus probably required for the activation of nickel-pincer cofactor-dependent enzymes. This Clostridium kluyveri (strain ATCC 8527 / DSM 555 / NBRC 12016 / NCIMB 10680 / K1) protein is Pyridinium-3,5-bisthiocarboxylic acid mononucleotide nickel insertion protein.